The chain runs to 282 residues: ATP phosphoribosyltransferase (282 aa).

It belongs to the ATP phosphoribosyltransferase family. Long subfamily. It depends on Mg(2+) as a cofactor.

The protein localises to the cytoplasm. It carries out the reaction 1-(5-phospho-beta-D-ribosyl)-ATP + diphosphate = 5-phospho-alpha-D-ribose 1-diphosphate + ATP. It participates in amino-acid biosynthesis; L-histidine biosynthesis; L-histidine from 5-phospho-alpha-D-ribose 1-diphosphate: step 1/9. Feedback inhibited by histidine. Functionally, catalyzes the condensation of ATP and 5-phosphoribose 1-diphosphate to form N'-(5'-phosphoribosyl)-ATP (PR-ATP). Has a crucial role in the pathway because the rate of histidine biosynthesis seems to be controlled primarily by regulation of HisG enzymatic activity. The sequence is that of ATP phosphoribosyltransferase from Pyrobaculum islandicum (strain DSM 4184 / JCM 9189 / GEO3).